The sequence spans 637 residues: Chaperone protein DnaK (637 aa).

Threonine 198 is modified (phosphothreonine; by autocatalysis). Over residues 601-615 the composition is skewed to low complexity; the sequence is AQQKAQAEQAGADAG. The interval 601-637 is disordered; it reads AQQKAQAEQAGADAGEQPKQDDDVVDAEFEEVKEDKK. The segment covering 623–637 has biased composition (acidic residues); it reads DVVDAEFEEVKEDKK.

This sequence belongs to the heat shock protein 70 family.

In terms of biological role, acts as a chaperone. This is Chaperone protein DnaK from Vibrio atlanticus (strain LGP32) (Vibrio splendidus (strain Mel32)).